A 417-amino-acid polypeptide reads, in one-letter code: Tyrosine--tRNA ligase (417 aa).

Tyr-39 contacts L-tyrosine. The 'HIGH' region signature appears at 44-53 (CTAPSLHVGH). 2 residues coordinate L-tyrosine: Tyr-176 and Gln-180. Positions 236–240 (KMGKT) match the 'KMSKS' region motif. Lys-239 contacts ATP. The region spanning 350–417 (AGVLALFVKA…KKRHVLLRPA (68 aa)) is the S4 RNA-binding domain.

It belongs to the class-I aminoacyl-tRNA synthetase family. TyrS type 1 subfamily. Homodimer.

It is found in the cytoplasm. The catalysed reaction is tRNA(Tyr) + L-tyrosine + ATP = L-tyrosyl-tRNA(Tyr) + AMP + diphosphate + H(+). Functionally, catalyzes the attachment of tyrosine to tRNA(Tyr) in a two-step reaction: tyrosine is first activated by ATP to form Tyr-AMP and then transferred to the acceptor end of tRNA(Tyr). The protein is Tyrosine--tRNA ligase of Nitrobacter winogradskyi (strain ATCC 25391 / DSM 10237 / CIP 104748 / NCIMB 11846 / Nb-255).